Consider the following 439-residue polypeptide: Protein translocase subunit SecY (439 aa).

10 consecutive transmembrane segments (helical) span residues 19–39, 68–88, 116–136, 151–171, 176–196, 216–236, 269–289, 312–332, 373–393, and 396–416; these read ILFT…TAPG, YSLF…VQLL, YITL…FQAM, LMIG…GEQI, FGSG…PSAI, WIFV…TTFV, VIPV…LQFL, WTGM…YSFV, VGSL…NVWG, and KIVA…IQAV.

It belongs to the SecY/SEC61-alpha family. In terms of assembly, component of the Sec protein translocase complex. Heterotrimer consisting of SecY, SecE and SecG subunits. The heterotrimers can form oligomers, although 1 heterotrimer is thought to be able to translocate proteins. Interacts with the ribosome. Interacts with SecDF, and other proteins may be involved. Interacts with SecA.

It localises to the cell membrane. In terms of biological role, the central subunit of the protein translocation channel SecYEG. Consists of two halves formed by TMs 1-5 and 6-10. These two domains form a lateral gate at the front which open onto the bilayer between TMs 2 and 7, and are clamped together by SecE at the back. The channel is closed by both a pore ring composed of hydrophobic SecY resides and a short helix (helix 2A) on the extracellular side of the membrane which forms a plug. The plug probably moves laterally to allow the channel to open. The ring and the pore may move independently. In Lactococcus lactis subsp. cremoris (Streptococcus cremoris), this protein is Protein translocase subunit SecY.